Here is a 319-residue protein sequence, read N- to C-terminus: HTH-type transcriptional regulator YidZ (319 aa).

The HTH lysR-type domain maps to L8–T65. The segment at residues V25 to A44 is a DNA-binding region (H-T-H motif).

Belongs to the LysR transcriptional regulatory family.

Its function is as follows. Involved in anaerobic NO protection. This is HTH-type transcriptional regulator YidZ from Salmonella agona (strain SL483).